The chain runs to 234 residues: Response regulator RppA (234 aa).

The 117-residue stretch at 2–118 (RILLVEDETD…ELLARLRALQ (117 aa)) folds into the Response regulatory domain. 4-aspartylphosphate is present on D53. The ompR/PhoB-type DNA-binding region spans 126 to 232 (PQILTLGNFS…VPGQGYRFTL (107 aa)).

Interacts with histidine kinase Hik2; may accept phosphate from Hik2.

Its function is as follows. Member of two-component regulatory system RppA/RppB, involved in the establishment of the appropriate stoichiometry between the 2 photosystems. It senses changes in the plastoquinone (PQ) redox poise. Another group shows this two-component pair, renamed NrsR/NrsS, controls the nickel-dependent expression of the nrsBACD operon; they suggest the photosystem-related activities seen earlier are due to the expression of NrsS (RppB) in the absence of its natural substrate NrsR (RppA). May accept phosphate from Hik2 in a possible Hik2/RppA two-component system. In Synechocystis sp. (strain ATCC 27184 / PCC 6803 / Kazusa), this protein is Response regulator RppA.